The sequence spans 630 residues: Alpha-1,3-mannosyltransferase MNT3 (630 aa).

The Cytoplasmic portion of the chain corresponds to 1–14 (MLKSLKSRRLILKR). A helical; Signal-anchor for type II membrane protein membrane pass occupies residues 15 to 31 (LVTLLLSLFFSYLIFSA). Over 32–630 (SRNVTSSNKL…NDISRTWNAN (599 aa)) the chain is Lumenal. N-linked (GlcNAc...) asparagine glycans are attached at residues Asn34 and Asn168.

This sequence belongs to the MNN1/MNT family.

It localises to the golgi apparatus membrane. It participates in protein modification; protein glycosylation. Mannosyltransferase involved in adding the 4th and 5th mannose residues of O-linked glycans. The sequence is that of Alpha-1,3-mannosyltransferase MNT3 (MNT3) from Saccharomyces cerevisiae (strain ATCC 204508 / S288c) (Baker's yeast).